The primary structure comprises 282 residues: Diaminopimelate epimerase (282 aa).

Asn13, Gln45, and Asn64 together coordinate substrate. Cys73 (proton donor) is an active-site residue. Substrate is bound by residues 74–75, Asn155, Asn189, and 207–208; these read GN and ER. The Proton acceptor role is filled by Cys216. 217 to 218 contributes to the substrate binding site; that stretch reads GS.

It belongs to the diaminopimelate epimerase family. Homodimer.

The protein resides in the cytoplasm. The catalysed reaction is (2S,6S)-2,6-diaminopimelate = meso-2,6-diaminopimelate. The protein operates within amino-acid biosynthesis; L-lysine biosynthesis via DAP pathway; DL-2,6-diaminopimelate from LL-2,6-diaminopimelate: step 1/1. In terms of biological role, catalyzes the stereoinversion of LL-2,6-diaminopimelate (L,L-DAP) to meso-diaminopimelate (meso-DAP), a precursor of L-lysine and an essential component of the bacterial peptidoglycan. This Bartonella bacilliformis (strain ATCC 35685 / KC583 / Herrer 020/F12,63) protein is Diaminopimelate epimerase.